We begin with the raw amino-acid sequence, 64 residues long: Large ribosomal subunit protein bL35 (64 aa).

The tract at residues 1–55 (MPKMKTNKSVSARFKLTASGQLKRTRPGKRHKLSKKSSQEKRNLSKQPLVDKGQV) is disordered. A compositionally biased stretch (basic residues) spans 23–35 (KRTRPGKRHKLSK).

The protein belongs to the bacterial ribosomal protein bL35 family.

This Chlamydia pneumoniae (Chlamydophila pneumoniae) protein is Large ribosomal subunit protein bL35.